The sequence spans 358 residues: tRNA-specific 2-thiouridylase MnmA (358 aa).

ATP contacts are provided by residues 6–13 and Leu32; that span reads AMSGGVDS. The active-site Nucleophile is Cys101. Cysteines 101 and 193 form a disulfide. Residue Gly125 coordinates ATP. Residues 143 to 145 are interaction with tRNA; the sequence is KDQ. The active-site Cysteine persulfide intermediate is Cys193.

Belongs to the MnmA/TRMU family.

Its subcellular location is the cytoplasm. The catalysed reaction is S-sulfanyl-L-cysteinyl-[protein] + uridine(34) in tRNA + AH2 + ATP = 2-thiouridine(34) in tRNA + L-cysteinyl-[protein] + A + AMP + diphosphate + H(+). Functionally, catalyzes the 2-thiolation of uridine at the wobble position (U34) of tRNA, leading to the formation of s(2)U34. The sequence is that of tRNA-specific 2-thiouridylase MnmA from Mycobacterium avium (strain 104).